The following is a 473-amino-acid chain: Photosystem II CP43 reaction center protein (473 aa).

Positions 1–14 (MKTLYSLRRFSHVE) are excised as a propeptide. Threonine 15 bears the N-acetylthreonine mark. Threonine 15 carries the post-translational modification Phosphothreonine. The next 5 membrane-spanning stretches (helical) occupy residues 69–93 (LFEV…PHLA), 134–155 (LLGP…KDRN), 178–200 (KALY…RKIT), 255–275 (KPFA…LSYS), and 291–312 (WFNN…ASQA). Residue glutamate 367 coordinates [CaMn4O5] cluster. Residues 447–471 (RARAAAAGFEKGIDRDFEPVLSMTP) form a helical membrane-spanning segment.

It belongs to the PsbB/PsbC family. PsbC subfamily. In terms of assembly, PSII is composed of 1 copy each of membrane proteins PsbA, PsbB, PsbC, PsbD, PsbE, PsbF, PsbH, PsbI, PsbJ, PsbK, PsbL, PsbM, PsbT, PsbX, PsbY, PsbZ, Psb30/Ycf12, at least 3 peripheral proteins of the oxygen-evolving complex and a large number of cofactors. It forms dimeric complexes. Binds multiple chlorophylls and provides some of the ligands for the Ca-4Mn-5O cluster of the oxygen-evolving complex. It may also provide a ligand for a Cl- that is required for oxygen evolution. PSII binds additional chlorophylls, carotenoids and specific lipids. is required as a cofactor.

It localises to the plastid membrane. Functionally, one of the components of the core complex of photosystem II (PSII). It binds chlorophyll and helps catalyze the primary light-induced photochemical processes of PSII. PSII is a light-driven water:plastoquinone oxidoreductase, using light energy to abstract electrons from H(2)O, generating O(2) and a proton gradient subsequently used for ATP formation. This chain is Photosystem II CP43 reaction center protein, found in Cuscuta gronovii (Common dodder).